Reading from the N-terminus, the 481-residue chain is MATPNAQSGKITQVIGPVVDVEFPPGALPDIYTALSVTNPAIDARADNLVIEVSQHLGENTARCIAMDSTDGLVRGMVVRDTGAPISVPVGKEVLGRILNVVGDPVDERGPVASVRKFPIHRPAPTLVDQNVKIEAFETGIKVIDLLAPYLRGGKIGLFGGAGVGKTVLLMELVNNVAKKRGGFSVFAGVGERTREGNDLYHEMIESGVINKDDLSKSQCVLVYGQMNEPPGARARVALSALAIAEYFRDEEKRDMLLFIDNIFRFTQAGSEVSALLGRIPSAVGYQPTLSTEMGELQERITSTKNGAITSVQAIYVPADDLTDPAPATAFAHLDATTVLSRKLTEIGIYPAVDPLDSTSRILDPLVVGAEHYQVAREVQETLQRYKDLQDIIAILGMDELSEDDKLTVARARKVQRFLSQPFHVAEQFTGNPGKYVELADTIRGFKEIVEGKHDDLPEQAFYMVGGIEEAVEKAKKLAAG.

160–167 is an ATP binding site; it reads GGAGVGKT.

It belongs to the ATPase alpha/beta chains family. As to quaternary structure, F-type ATPases have 2 components, CF(1) - the catalytic core - and CF(0) - the membrane proton channel. CF(1) has five subunits: alpha(3), beta(3), gamma(1), delta(1), epsilon(1). CF(0) has three main subunits: a(1), b(2) and c(9-12). The alpha and beta chains form an alternating ring which encloses part of the gamma chain. CF(1) is attached to CF(0) by a central stalk formed by the gamma and epsilon chains, while a peripheral stalk is formed by the delta and b chains.

It localises to the cell inner membrane. The catalysed reaction is ATP + H2O + 4 H(+)(in) = ADP + phosphate + 5 H(+)(out). Produces ATP from ADP in the presence of a proton gradient across the membrane. The catalytic sites are hosted primarily by the beta subunits. The polypeptide is ATP synthase subunit beta (Anaeromyxobacter sp. (strain Fw109-5)).